The primary structure comprises 360 residues: Phospho-N-acetylmuramoyl-pentapeptide-transferase (360 aa).

10 helical membrane passes run 25-45 (RGIL…PWMI), 73-93 (TMGG…WADL), 97-117 (YVWV…VDDY), 132-152 (WKYF…YMTA), 168-188 (VSIP…VGSS), 199-219 (GLAI…CYLS), 236-256 (AGEL…FLWF), 263-283 (VFMG…IAVI), 288-308 (IVLF…VIQV), and 338-358 (VIVR…ATLK).

It belongs to the glycosyltransferase 4 family. MraY subfamily. Mg(2+) serves as cofactor.

It localises to the cell inner membrane. It carries out the reaction UDP-N-acetyl-alpha-D-muramoyl-L-alanyl-gamma-D-glutamyl-meso-2,6-diaminopimeloyl-D-alanyl-D-alanine + di-trans,octa-cis-undecaprenyl phosphate = di-trans,octa-cis-undecaprenyl diphospho-N-acetyl-alpha-D-muramoyl-L-alanyl-D-glutamyl-meso-2,6-diaminopimeloyl-D-alanyl-D-alanine + UMP. The protein operates within cell wall biogenesis; peptidoglycan biosynthesis. Catalyzes the initial step of the lipid cycle reactions in the biosynthesis of the cell wall peptidoglycan: transfers peptidoglycan precursor phospho-MurNAc-pentapeptide from UDP-MurNAc-pentapeptide onto the lipid carrier undecaprenyl phosphate, yielding undecaprenyl-pyrophosphoryl-MurNAc-pentapeptide, known as lipid I. The sequence is that of Phospho-N-acetylmuramoyl-pentapeptide-transferase from Pseudomonas fluorescens (strain ATCC BAA-477 / NRRL B-23932 / Pf-5).